A 159-amino-acid chain; its full sequence is Phosphopantetheine adenylyltransferase (159 aa).

T10 serves as a coordination point for substrate. ATP-binding positions include 10 to 11 (TF) and H18. Substrate-binding residues include K42, M74, and R88. ATP is bound by residues 89–91 (GLR), E99, and 124–130 (WSFISSS).

The protein belongs to the bacterial CoaD family. In terms of assembly, homohexamer. The cofactor is Mg(2+).

It is found in the cytoplasm. It catalyses the reaction (R)-4'-phosphopantetheine + ATP + H(+) = 3'-dephospho-CoA + diphosphate. It participates in cofactor biosynthesis; coenzyme A biosynthesis; CoA from (R)-pantothenate: step 4/5. In terms of biological role, reversibly transfers an adenylyl group from ATP to 4'-phosphopantetheine, yielding dephospho-CoA (dPCoA) and pyrophosphate. This chain is Phosphopantetheine adenylyltransferase, found in Escherichia coli (strain UTI89 / UPEC).